Here is a 631-residue protein sequence, read N- to C-terminus: MLPVDGEERKSEGSDTEGDRTSPCAVSSATLKDLEVGGSGRRCSDPAGQPSNLLPQRGLGAPLPAETAHTQPSPNDRSLYLSPKSSSASSSLHARQSPCQEQAAVLNSRSIKISRLNDTIKSLKQQKKQVEHQLEEEKKANNEKQKAERELEGQIQRLNTEKKKLNTDLYHMKHSLRYFEEESKDLAGRLQRSSQRIGELEWSLCAVAATQKKKPDGFSSRSKALLKRQLEQSIREQILLKGHVTQLKESLKEVQLERDQYAEQIKGERAQWQQRMRKMSQEVCTLKEEKKHDTHRVEELERSLSRLKNQMAEPLPPDAPAVSSEVELQDLRKELERVAGELQAQVENNQCISLLNRGQKERLREQEERLQEQQERLREREKRLQQLAEPQSDLEELKHENKSALQLEQQVKELQEKLGQVMETLTSAEKEPEAAVPASGTGGESSGLMDLLEEKADLREHVEKLELGFIQYRRERCHQKVHRLLTEPGDSAKDASPGGGHHQAGPGQGGEEGEAAGAAGDGVAACGSYSEGHGKFLAAARNPAAEPSPGAPAPQELGAADKHGDLCEASLTNSVEPAQGEAREGSSQDNPTAQPVVQLLGEMQDHQEHPGLGSNCCVPCFCWAWLPRRRR.

The span at 1–20 shows a compositional bias: basic and acidic residues; the sequence is MLPVDGEERKSEGSDTEGDR. Disordered regions lie at residues 1–103, 127–154, 426–447, and 488–520; these read MLPV…QEQA, KKQV…LEGQ, TSAE…ESSG, and PGDS…GAAG. The segment covering 78–92 has biased composition (low complexity); the sequence is SLYLSPKSSSASSSL. The span at 93–103 shows a compositional bias: polar residues; it reads HARQSPCQEQA. The stretch at 110 to 468 forms a coiled coil; sequence SIKISRLNDT…REHVEKLELG (359 aa). Basic and acidic residues predominate over residues 128 to 152; the sequence is KQVEHQLEEEKKANNEKQKAERELE. Residues 497–510 show a composition bias toward gly residues; that stretch reads PGGGHHQAGPGQGG. The golgi-targeting domain stretch occupies residues 519–631; the sequence is AGDGVAACGS…CWAWLPRRRR (113 aa).

It belongs to the GOLGA8 family.

The protein localises to the golgi apparatus. The protein resides in the golgi stack membrane. May be involved in maintaining Golgi structure. This chain is Golgin subfamily A member 8A (GOLGA8A), found in Homo sapiens (Human).